We begin with the raw amino-acid sequence, 1289 residues long: Pesticidal crystal protein Cry5Ab (1289 aa).

The segment at 1263 to 1289 is disordered; that stretch reads PLPTDDQNSEGNTASSTNSDTSMNNNQ. A compositionally biased stretch (low complexity) spans 1274–1289; the sequence is NTASSTNSDTSMNNNQ.

It belongs to the delta endotoxin family.

Its function is as follows. Endotoxin with nematicidal activity. This Bacillus thuringiensis subsp. darmstadiensis protein is Pesticidal crystal protein Cry5Ab (cry5Ab).